Reading from the N-terminus, the 204-residue chain is Peptide deformylase (204 aa).

Cysteine 131 and histidine 174 together coordinate Fe cation. Glutamate 175 is a catalytic residue. Histidine 178 lines the Fe cation pocket.

This sequence belongs to the polypeptide deformylase family. The cofactor is Fe(2+).

It catalyses the reaction N-terminal N-formyl-L-methionyl-[peptide] + H2O = N-terminal L-methionyl-[peptide] + formate. Removes the formyl group from the N-terminal Met of newly synthesized proteins. Requires at least a dipeptide for an efficient rate of reaction. N-terminal L-methionine is a prerequisite for activity but the enzyme has broad specificity at other positions. The protein is Peptide deformylase of Streptococcus agalactiae serotype III (strain NEM316).